The chain runs to 201 residues: Small ribosomal subunit protein uS4 (201 aa).

The tract at residues 26 to 46 is disordered; sequence LARRAYAPGDHGRDRRGKLSE. Residues 35-44 are compositionally biased toward basic and acidic residues; that stretch reads DHGRDRRGKL. In terms of domain architecture, S4 RNA-binding spans 93-156; sequence RRLDNMVYRL…KNLDIIKNAV (64 aa).

This sequence belongs to the universal ribosomal protein uS4 family. In terms of assembly, part of the 30S ribosomal subunit. Contacts protein S5. The interaction surface between S4 and S5 is involved in control of translational fidelity.

In terms of biological role, one of the primary rRNA binding proteins, it binds directly to 16S rRNA where it nucleates assembly of the body of the 30S subunit. Its function is as follows. With S5 and S12 plays an important role in translational accuracy. The chain is Small ribosomal subunit protein uS4 from Limosilactobacillus reuteri (strain DSM 20016) (Lactobacillus reuteri).